A 145-amino-acid chain; its full sequence is Large ribosomal subunit protein mL59 (145 aa).

The span at 123 to 135 (LKKTSKFKNERQK) shows a compositional bias: basic and acidic residues. The disordered stretch occupies residues 123-145 (LKKTSKFKNERQKASKIAKPSPF).

This sequence belongs to the mitochondrion-specific ribosomal protein mL59 family. As to quaternary structure, component of the mitochondrial large ribosomal subunit (mt-LSU). Mature yeast 74S mitochondrial ribosomes consist of a small (37S) and a large (54S) subunit. The 37S small subunit contains a 15S ribosomal RNA (15S mt-rRNA) and at least 32 different proteins. The 54S large subunit contains a 21S rRNA (21S mt-rRNA) and at least 45 different proteins.

The protein resides in the mitochondrion. Its function is as follows. Component of the mitochondrial ribosome (mitoribosome), a dedicated translation machinery responsible for the synthesis of mitochondrial genome-encoded proteins, including at least some of the essential transmembrane subunits of the mitochondrial respiratory chain. The mitoribosomes are attached to the mitochondrial inner membrane and translation products are cotranslationally integrated into the membrane. The chain is Large ribosomal subunit protein mL59 (mrpl25) from Schizosaccharomyces pombe (strain 972 / ATCC 24843) (Fission yeast).